Reading from the N-terminus, the 633-residue chain is MKSNYSATNIKILKGLDAVKKRPGMYIGSTDSKGLHHMLWEILANSVDEVLAGYATNITVTLDLNNTITVSDDGRGIPYEIHQDSNISTIDTVFTFLHAGGKFDDQSYKLAGGLHGVGASVVNALSDHLEVTVKRNGQIYQSVYQAGGKIIQKAKKIGDTTSHGTTVSFHADPKVFKKAQFDSNIIKSRLKELSFLFAKLKLTFTDQKTNKTTVFFSTSGLVQFLDEINNTVETLGQKTLIKGEKDGIEVEVVFQFNQSDQETILSFANSIKTFEGGSHENGFCLAISDVINSYCRKYNLLKEKDKNFQLSEIRQGLNAIIKVNLPEKNIAFEGQTKSKLFSKEVKNVVYELVQQHYFQFLERNNNDAKLIIDKLLNARKIKEQIKQQRELKKSLSSPQKEKILFGKLAPCQTKKTSEKELFIVEGDSAGGTAKMGRDRIFQAILPLRGKVLNVEKINNKKEAITNEEILTLIFCIGTGILTNFNIKDLKYGKIIIMTDADNDGAHIQILLLTFFYRYMQPLIELGHVYLALPPLYKLETKDRKTVKYLWSDLELESVKLKLNNFTLQRYKGLGEMNADQLWDTTMNPTTRKLVQVKLDDLINAEKQINIFMGEKSDLRKHWIEANINFSVEN.

Residues Tyr5, Asn45, Asp72, 113-119 (GLHGVGA), and Lys337 contribute to the ATP site. In terms of domain architecture, Toprim spans 419–534 (KELFIVEGDS…LGHVYLALPP (116 aa)). Mg(2+)-binding residues include Glu425, Asp499, and Asp501.

The protein belongs to the type II topoisomerase family. ParE type 2 subfamily. As to quaternary structure, heterotetramer composed of ParC and ParE. Mg(2+) is required as a cofactor. Requires Mn(2+) as cofactor. It depends on Ca(2+) as a cofactor.

It carries out the reaction ATP-dependent breakage, passage and rejoining of double-stranded DNA.. In terms of biological role, topoisomerase IV is essential for chromosome segregation. It relaxes supercoiled DNA. Performs the decatenation events required during the replication of a circular DNA molecule. In Mycoplasma genitalium (strain ATCC 33530 / DSM 19775 / NCTC 10195 / G37) (Mycoplasmoides genitalium), this protein is DNA topoisomerase 4 subunit B.